Here is a 267-residue protein sequence, read N- to C-terminus: Formamidopyrimidine-DNA glycosylase (267 aa).

The active-site Schiff-base intermediate with DNA is the Pro2. Glu3 (proton donor) is an active-site residue. The Proton donor; for beta-elimination activity role is filled by Lys58. Positions 91, 110, and 152 each coordinate DNA. An FPG-type zinc finger spans residues 233–267; sequence DVYGRGTDACTRCGGALEEIRLGNRSTVFCPRCQT. Arg257 (proton donor; for delta-elimination activity) is an active-site residue.

This sequence belongs to the FPG family. Monomer. Zn(2+) is required as a cofactor.

It catalyses the reaction Hydrolysis of DNA containing ring-opened 7-methylguanine residues, releasing 2,6-diamino-4-hydroxy-5-(N-methyl)formamidopyrimidine.. It carries out the reaction 2'-deoxyribonucleotide-(2'-deoxyribose 5'-phosphate)-2'-deoxyribonucleotide-DNA = a 3'-end 2'-deoxyribonucleotide-(2,3-dehydro-2,3-deoxyribose 5'-phosphate)-DNA + a 5'-end 5'-phospho-2'-deoxyribonucleoside-DNA + H(+). Functionally, involved in base excision repair of DNA damaged by oxidation or by mutagenic agents. Acts as a DNA glycosylase that recognizes and removes damaged bases. Has a preference for oxidized purines, such as 7,8-dihydro-8-oxoguanine (8-oxoG). Has AP (apurinic/apyrimidinic) lyase activity and introduces nicks in the DNA strand. Cleaves the DNA backbone by beta-delta elimination to generate a single-strand break at the site of the removed base with both 3'- and 5'-phosphates. The sequence is that of Formamidopyrimidine-DNA glycosylase from Geobacter metallireducens (strain ATCC 53774 / DSM 7210 / GS-15).